The sequence spans 248 residues: Acetylglutamate kinase (248 aa).

Residues 36 to 37 (GG), Arg-58, and Asn-147 each bind substrate.

Belongs to the acetylglutamate kinase family. ArgB subfamily.

It is found in the cytoplasm. The enzyme catalyses N-acetyl-L-glutamate + ATP = N-acetyl-L-glutamyl 5-phosphate + ADP. The protein operates within amino-acid biosynthesis; L-arginine biosynthesis; N(2)-acetyl-L-ornithine from L-glutamate: step 2/4. Catalyzes the ATP-dependent phosphorylation of N-acetyl-L-glutamate. This Thermus thermophilus (strain ATCC BAA-163 / DSM 7039 / HB27) protein is Acetylglutamate kinase.